The chain runs to 156 residues: Endogenous retrovirus group K member 9 Pro protein (156 aa).

Residues 21–96 (FEGLVDTGAD…IPLNLWGRDL (76 aa)) enclose the Peptidase A2 domain. Residue Asp-26 is part of the active site. In terms of domain architecture, G-patch spans 111 to 156 (YSPTSQKIMTKRGYIPGKGLGKNEDGIKIPFEAKINQKREGIGYPF).

This sequence belongs to the peptidase A2 family. HERV class-II K(HML-2) subfamily. In terms of assembly, active as a homodimer. Autoproteolytically processed at the N-terminus. Expected C-terminal autoprocessing not detected. The sequence shown is that of the processed Pro protein.

It catalyses the reaction Processing at the authentic HIV-1 PR recognition site and release of the mature p17 matrix and the p24 capsid protein, as a result of the cleavage of the -SQNY-|-PIVQ- cleavage site.. Retroviral proteases have roles in the processing of the primary translation products and the maturation of the viral particle. Endogenous Pro proteins may have kept, lost or modified their original function during evolution. The protein is Endogenous retrovirus group K member 9 Pro protein (ERVK-9) of Homo sapiens (Human).